Here is a 1164-residue protein sequence, read N- to C-terminus: DNA-directed RNA polymerase 133 kDa polypeptide (1164 aa).

This sequence belongs to the RNA polymerase beta chain family. The DNA-dependent RNA polymerase used for intermediate and late genes expression consists of eight subunits 147 kDa, 133 kDa, 35 kDa, 30 kDa, 22 kDa, 19 kDa, 18 kDa and 7 kDa totalling more than 500 kDa in mass. The same holoenzyme, with the addition of the transcription-specificity factor RAP94, is used for early gene expression.

It is found in the virion. It catalyses the reaction RNA(n) + a ribonucleoside 5'-triphosphate = RNA(n+1) + diphosphate. Part of the DNA-dependent RNA polymerase which catalyzes the transcription of viral DNA into RNA using the four ribonucleoside triphosphates as substrates. Responsible for the transcription of early, intermediate and late genes. DNA-dependent RNA polymerase associates with the early transcription factor (ETF), itself composed of OPG118 and OPG133, thereby allowing the early genes transcription. Late transcription, and probably also intermediate transcription, require newly synthesized RNA polymerase. In Homo sapiens (Human), this protein is DNA-directed RNA polymerase 133 kDa polypeptide (OPG151).